Here is a 195-residue protein sequence, read N- to C-terminus: MDAPRRSSRLAAKIANVLDSKGTIIPEAAPVMLKKPAKDESVDSTIQVGDVIPDITLPDEDGTSIRLRDITANKGLVIFAYPKASTPGCTKQGCGFRDNYPKIQASDYEVLGLSFDTSKAQKAFKDKQNFPYHLLSDPKGELIKKLGAEKPGGGKLFRSHWIFEKGTGKCIVKEIDISPLVSVDKAFAVITDSEP.

The Thioredoxin domain maps to 46–168; sequence IQVGDVIPDI…SHWIFEKGTG (123 aa). Catalysis depends on Cys89, which acts as the Cysteine sulfenic acid (-SOH) intermediate. Cys89 and Cys94 are disulfide-bonded.

The protein belongs to the peroxiredoxin family. BCP/PrxQ subfamily. Monomer. The active site is a conserved redox-active cysteine residue, the peroxidatic cysteine (C(P)), which makes the nucleophilic attack on the peroxide substrate. The peroxide oxidizes the C(P)-SH to cysteine sulfenic acid (C(P)-SOH), which then reacts with another cysteine residue, the resolving cysteine (C(R)), to form a disulfide bridge. The disulfide is subsequently reduced by an appropriate electron donor to complete the catalytic cycle. In this atypical 2-Cys peroxiredoxin, C(R) is present in the same subunit to form an intramolecular disulfide. The disulfide is subsequently reduced by thioredoxin.

The protein resides in the cytoplasm. It is found in the nucleus. The catalysed reaction is a hydroperoxide + [thioredoxin]-dithiol = an alcohol + [thioredoxin]-disulfide + H2O. In terms of biological role, thiol-specific peroxidase that catalyzes the reduction of hydrogen peroxide and organic hydroperoxides to water and alcohols, respectively. Plays a role in cell protection against oxidative stress by detoxifying peroxides and as sensor of hydrogen peroxide-mediated signaling events. Acts as a scavenger of H(2)O(2). The chain is Peroxiredoxin bcp1 (bcp1) from Schizosaccharomyces pombe (strain 972 / ATCC 24843) (Fission yeast).